The primary structure comprises 263 residues: Hydroxyethylthiazole kinase (263 aa).

Methionine 41 provides a ligand contact to substrate. Lysine 117 and serine 163 together coordinate ATP. Glycine 190 provides a ligand contact to substrate.

It belongs to the Thz kinase family. Mg(2+) is required as a cofactor.

The catalysed reaction is 5-(2-hydroxyethyl)-4-methylthiazole + ATP = 4-methyl-5-(2-phosphooxyethyl)-thiazole + ADP + H(+). The protein operates within cofactor biosynthesis; thiamine diphosphate biosynthesis; 4-methyl-5-(2-phosphoethyl)-thiazole from 5-(2-hydroxyethyl)-4-methylthiazole: step 1/1. Catalyzes the phosphorylation of the hydroxyl group of 4-methyl-5-beta-hydroxyethylthiazole (THZ). In Thermoanaerobacter sp. (strain X514), this protein is Hydroxyethylthiazole kinase.